The sequence spans 382 residues: Mannitol-1-phosphate 5-dehydrogenase (382 aa).

NAD(+) is bound at residue 4 to 15 (AVHFGAGNIGRG).

Belongs to the mannitol dehydrogenase family.

The enzyme catalyses D-mannitol 1-phosphate + NAD(+) = beta-D-fructose 6-phosphate + NADH + H(+). In Vibrio vulnificus (strain YJ016), this protein is Mannitol-1-phosphate 5-dehydrogenase.